The primary structure comprises 257 residues: UPF0246 protein CLH_2088 (257 aa).

Belongs to the UPF0246 family.

The chain is UPF0246 protein CLH_2088 from Clostridium botulinum (strain Alaska E43 / Type E3).